The primary structure comprises 302 residues: Meiotically up-regulated gene 129 protein (302 aa).

Has a role in meiosis. In Schizosaccharomyces pombe (strain 972 / ATCC 24843) (Fission yeast), this protein is Meiotically up-regulated gene 129 protein (mug129).